Here is a 353-residue protein sequence, read N- to C-terminus: Photosystem II D2 protein (353 aa).

Thr2 bears the N-acetylthreonine mark. Thr2 carries the post-translational modification Phosphothreonine. The chain crosses the membrane as a helical span at residues 41–61 (CAYFALGGWFTGTTFVTSWYT). His118 serves as a coordination point for chlorophyll a. Residues 125–141 (GFMLRQFELARSVQLRP) form a helical membrane-spanning segment. 2 residues coordinate pheophytin a: Gln130 and Asn143. The chain crosses the membrane as a helical span at residues 153 to 166 (VFVSVFLIYPLGQS). Position 198 (His198) interacts with chlorophyll a. A helical membrane pass occupies residues 208–228 (AALLCAIHGATVENTLFEDGD). Residues His215 and Phe262 each coordinate a plastoquinone. His215 serves as a coordination point for Fe cation. His269 is a Fe cation binding site. Residues 279 to 295 (GLWMSALGVVGLALNLR) form a helical membrane-spanning segment.

It belongs to the reaction center PufL/M/PsbA/D family. In terms of assembly, PSII is composed of 1 copy each of membrane proteins PsbA, PsbB, PsbC, PsbD, PsbE, PsbF, PsbH, PsbI, PsbJ, PsbK, PsbL, PsbM, PsbT, PsbX, PsbY, PsbZ, Psb30/Ycf12, at least 3 peripheral proteins of the oxygen-evolving complex and a large number of cofactors. It forms dimeric complexes. The D1/D2 heterodimer binds P680, chlorophylls that are the primary electron donor of PSII, and subsequent electron acceptors. It shares a non-heme iron and each subunit binds pheophytin, quinone, additional chlorophylls, carotenoids and lipids. There is also a Cl(-1) ion associated with D1 and D2, which is required for oxygen evolution. The PSII complex binds additional chlorophylls, carotenoids and specific lipids. is required as a cofactor.

The protein resides in the plastid. It localises to the chloroplast thylakoid membrane. The enzyme catalyses 2 a plastoquinone + 4 hnu + 2 H2O = 2 a plastoquinol + O2. Photosystem II (PSII) is a light-driven water:plastoquinone oxidoreductase that uses light energy to abstract electrons from H(2)O, generating O(2) and a proton gradient subsequently used for ATP formation. It consists of a core antenna complex that captures photons, and an electron transfer chain that converts photonic excitation into a charge separation. The D1/D2 (PsbA/PsbD) reaction center heterodimer binds P680, the primary electron donor of PSII as well as several subsequent electron acceptors. D2 is needed for assembly of a stable PSII complex. In Ceratophyllum demersum (Rigid hornwort), this protein is Photosystem II D2 protein.